The following is a 1111-amino-acid chain: Lon protease homolog, mitochondrial (1111 aa).

A mitochondrion-targeting transit peptide spans 1–21 (MLRSSRSRLVTRNILLRQFKN). Disordered regions lie at residues 85 to 177 (IQLK…AKQP) and 288 to 311 (PPTS…ENNE). The segment covering 88-125 (KQDDKGKDIDQPESENRKKEEEQVPTEEKDNDTAKESE) has biased composition (basic and acidic residues). The segment covering 126–135 (TSQQRDSVAE) has biased composition (polar residues). Residues 145-167 (GASGNGESSGNGSGDDGNNGSGN) are compositionally biased toward gly residues. The 266-residue stretch at 185–450 (VMALPISRRP…KALTVLKKEL (266 aa)) folds into the Lon N-terminal domain. Residues 294-306 (NLKDESDVSKSEG) are compositionally biased toward basic and acidic residues. 602–609 (GPPGVGKT) lines the ATP pocket. 2 stretches are compositionally biased toward basic and acidic residues: residues 819 to 835 (ENEE…KQSE) and 853 to 865 (ELIK…DNKG). Residues 819 to 866 (ENEEVKDQKDIKVKQSENKSSAEASTVESTTEENELIKTQKSHDNKGS) are disordered. A Lon proteolytic domain is found at 899–1085 (STPPGVVMGL…EDVFQRLFGD (187 aa)). Active-site residues include serine 991 and lysine 1034.

It belongs to the peptidase S16 family. Homohexamer or homoheptamer. Organized in a ring with a central cavity.

The protein resides in the mitochondrion matrix. The catalysed reaction is Hydrolysis of proteins in presence of ATP.. Its function is as follows. ATP-dependent serine protease that mediates the selective degradation of misfolded, unassembled or oxidatively damaged polypeptides as well as certain short-lived regulatory proteins in the mitochondrial matrix. May also have a chaperone function in the assembly of inner membrane protein complexes. Participates in the regulation of mitochondrial gene expression and in the maintenance of the integrity of the mitochondrial genome. Binds to mitochondrial DNA in a site-specific manner. The chain is Lon protease homolog, mitochondrial from Kluyveromyces lactis (strain ATCC 8585 / CBS 2359 / DSM 70799 / NBRC 1267 / NRRL Y-1140 / WM37) (Yeast).